The following is a 271-amino-acid chain: Glutamate racemase (271 aa).

Substrate-binding positions include 13–14 and 45–46; these read DS and YG. The active-site Proton donor/acceptor is C77. Position 78–79 (78–79) interacts with substrate; it reads NT. The active-site Proton donor/acceptor is the C192. 193-194 contributes to the substrate binding site; the sequence is TH.

Belongs to the aspartate/glutamate racemases family.

The catalysed reaction is L-glutamate = D-glutamate. Its pathway is cell wall biogenesis; peptidoglycan biosynthesis. Provides the (R)-glutamate required for cell wall biosynthesis. The chain is Glutamate racemase from Sinorhizobium medicae (strain WSM419) (Ensifer medicae).